The sequence spans 155 residues: Protein U1 (155 aa).

It belongs to the nanovirus U1 protein family.

The polypeptide is Protein U1 (DNA-U1) (Cicer arietinum (Chickpea)).